A 690-amino-acid polypeptide reads, in one-letter code: Glycine--tRNA ligase 1, mitochondrial (690 aa).

Residues 1–24 (MSFFNISRRFYSQIVKKSVKIKRM) constitute a mitochondrion transit peptide. An N-acetylserine modification is found at Ser25. Position 226 is a phosphoserine (Ser226). Glu251 lines the glycine pocket. ATP-binding positions include 283-285 (RNE) and 294-295 (RV). A glycine-binding site is contributed by Glu302. 410–411 (EC) lines the ATP pocket. Phosphoserine is present on residues Ser476 and Ser528. Residue 531-533 (EPS) participates in glycine binding. Arg538 is a binding site for ATP. Residue Thr689 is modified to Phosphothreonine.

It belongs to the class-II aminoacyl-tRNA synthetase family. In terms of assembly, homodimer.

It localises to the cytoplasm. The protein resides in the mitochondrion matrix. It carries out the reaction tRNA(Gly) + glycine + ATP = glycyl-tRNA(Gly) + AMP + diphosphate. The catalysed reaction is 2 ATP + H(+) = P(1),P(4)-bis(5'-adenosyl) tetraphosphate + diphosphate. Its function is as follows. Catalyzes the ATP-dependent ligation of glycine to the 3'-end of its cognate tRNA, via the formation of an aminoacyl-adenylate intermediate (Gly-AMP). Also produces diadenosine tetraphosphate (Ap4A), a universal pleiotropic signaling molecule needed for cell regulation pathways, by direct condensation of 2 ATPs. Thereby, may play a special role in Ap4A homeostasis. This is Glycine--tRNA ligase 1, mitochondrial (GRS1) from Saccharomyces cerevisiae (strain ATCC 204508 / S288c) (Baker's yeast).